Consider the following 497-residue polypeptide: Galactose/methyl galactoside import ATP-binding protein MglA (497 aa).

2 consecutive ABC transporter domains span residues 6-241 (LEIK…VGRS) and 252-497 (VPGE…AKYL). Position 38-45 (38-45 (GENGAGKS)) interacts with ATP.

This sequence belongs to the ABC transporter superfamily. Galactose/methyl galactoside importer (TC 3.A.1.2.3) family. As to quaternary structure, the complex is composed of one ATP-binding protein (MglA), two transmembrane proteins (MglC) and a solute-binding protein (MglB).

It localises to the cell inner membrane. It catalyses the reaction D-galactose(out) + ATP + H2O = D-galactose(in) + ADP + phosphate + H(+). The enzyme catalyses methyl beta-D-galactoside(out) + ATP + H2O = methyl beta-D-galactoside(in) + ADP + phosphate + H(+). In terms of biological role, part of the ABC transporter complex MglABC involved in galactose/methyl galactoside import. Responsible for energy coupling to the transport system. The sequence is that of Galactose/methyl galactoside import ATP-binding protein MglA from Treponema denticola (strain ATCC 35405 / DSM 14222 / CIP 103919 / JCM 8153 / KCTC 15104).